A 733-amino-acid chain; its full sequence is Phosphoribosylformylglycinamidine synthase subunit PurL (733 aa).

The active site involves His-41. The ATP site is built by Tyr-44 and Lys-83. Mg(2+) is bound at residue Glu-85. Substrate contacts are provided by residues 86 to 89 (SHNH) and Arg-108. His-87 (proton acceptor) is an active-site residue. Asp-109 serves as a coordination point for Mg(2+). Positions 212-232 (GASFASQELSEESEEKRPSVQ) are disordered. Gln-232 provides a ligand contact to substrate. Asp-260 is a binding site for Mg(2+). Residue 304-306 (ESQ) coordinates substrate. Residues Asp-488 and Gly-525 each contribute to the ATP site. Mg(2+) is bound at residue Asn-526. Position 528 (Ser-528) interacts with substrate.

Belongs to the FGAMS family. Monomer. Part of the FGAM synthase complex composed of 1 PurL, 1 PurQ and 2 PurS subunits.

Its subcellular location is the cytoplasm. It catalyses the reaction N(2)-formyl-N(1)-(5-phospho-beta-D-ribosyl)glycinamide + L-glutamine + ATP + H2O = 2-formamido-N(1)-(5-O-phospho-beta-D-ribosyl)acetamidine + L-glutamate + ADP + phosphate + H(+). It functions in the pathway purine metabolism; IMP biosynthesis via de novo pathway; 5-amino-1-(5-phospho-D-ribosyl)imidazole from N(2)-formyl-N(1)-(5-phospho-D-ribosyl)glycinamide: step 1/2. Functionally, part of the phosphoribosylformylglycinamidine synthase complex involved in the purines biosynthetic pathway. Catalyzes the ATP-dependent conversion of formylglycinamide ribonucleotide (FGAR) and glutamine to yield formylglycinamidine ribonucleotide (FGAM) and glutamate. The FGAM synthase complex is composed of three subunits. PurQ produces an ammonia molecule by converting glutamine to glutamate. PurL transfers the ammonia molecule to FGAR to form FGAM in an ATP-dependent manner. PurS interacts with PurQ and PurL and is thought to assist in the transfer of the ammonia molecule from PurQ to PurL. The chain is Phosphoribosylformylglycinamidine synthase subunit PurL from Thermoanaerobacter sp. (strain X514).